Reading from the N-terminus, the 92-residue chain is Small ribosomal subunit protein uS19 (92 aa).

It belongs to the universal ribosomal protein uS19 family. As to quaternary structure, part of the 30S ribosomal subunit.

Protein S19 forms a complex with S13 that binds strongly to the 16S ribosomal RNA. In Bacillus subtilis (strain 168), this protein is Small ribosomal subunit protein uS19 (rpsS).